The following is a 486-amino-acid chain: Cardiolipin synthase A (486 aa).

Helical transmembrane passes span threonine 3 to valine 23 and methionine 38 to valine 58. 2 consecutive PLD phosphodiesterase domains span residues methionine 219–arginine 246 and glutamate 399–serine 426. Catalysis depends on residues histidine 224, lysine 226, aspartate 231, histidine 404, lysine 406, and aspartate 411.

Belongs to the phospholipase D family. Cardiolipin synthase subfamily. ClsA sub-subfamily.

It is found in the cell inner membrane. The enzyme catalyses 2 a 1,2-diacyl-sn-glycero-3-phospho-(1'-sn-glycerol) = a cardiolipin + glycerol. Catalyzes the reversible phosphatidyl group transfer from one phosphatidylglycerol molecule to another to form cardiolipin (CL) (diphosphatidylglycerol) and glycerol. The sequence is that of Cardiolipin synthase A from Salmonella arizonae (strain ATCC BAA-731 / CDC346-86 / RSK2980).